The chain runs to 303 residues: Thioesterase poxG (303 aa).

Belongs to the lcsJ thioesterase family.

It functions in the pathway secondary metabolite biosynthesis. Thioesterase; part of the gene cluster that mediates the biosynthesis of oxaleimides, cytotoxic compounds containing an unusual disubstituted succinimide moiety. The first step of the pathway is provided by the HR-PKS poxF that serves in a new mode of collaborative biosynthesis with the PKS-NRPS poxE, by providing the olefin containing amino acid substrate via the synthesis of an ACP-bound dec-4-enoate. The cytochrome P450 monooxygenase poxM-catalyzed oxidation at the alpha-position creates the enzyme-bound 2-hydroxydec-4-enoyl-ACP thioester, which may be prone to spontaneous hydrolysis to yield 2-hydroxydec-4-enoic acid due to increased electrophilicity of the carbonyl. 2-hydroxydec-4-enoic acid can then be further oxidized by poxM to yield the alpha-ketoacid 2-oxodec-4-enoicacid, which is reductively aminated by the aminotransferase poxL to yield (S,E)-2-aminodec-4-enoic acid. The Hybrid PKS-NRPS synthetase poxE then performs condensation between the octaketide product of its PKS modules and the amino group of (S,E)-2-aminodec-4-enoic acid which is activated and incorporated by the adenylation domain. The resulting aminoacyl product can be cyclized by the Diels-Alderase PoxQ and reductively released by the reductive (R) domain of poxE to yield an aldehyde intermediate. The released aldehyde is then substrate for a Knoevenagel condensation by the hydrolyase poxO followed by an oxidation at the 5-position of the pyrrolidone ring. The presence of the olefin from the amino acid building block allows for migration of the substituted allyl group to occur. This allylic transposition reaction takes place in a conjugate addition, semipinacol-like fashion to yield a succinimide intermediate. Iterative two-electron oxidations of the C7 methyl of the succinimide intermediate to the carboxylic acid can be catalyzed by one of two remaining cytochrome P450 monooxygenasess poxC or poxD to yield oxaleimide A. Subsequent oxidation yields the maleimide scaffold oxaleimide I. Both oxaleimide A and oxaleimide I can undergo oxidative modifications in the decalin ring to yield the series of products oxaleimides B to H. This is Thioesterase poxG from Penicillium oxalicum.